The chain runs to 276 residues: Elongation factor Ts (276 aa).

The interval threonine 80–valine 83 is involved in Mg(2+) ion dislocation from EF-Tu.

This sequence belongs to the EF-Ts family.

It is found in the cytoplasm. Associates with the EF-Tu.GDP complex and induces the exchange of GDP to GTP. It remains bound to the aminoacyl-tRNA.EF-Tu.GTP complex up to the GTP hydrolysis stage on the ribosome. This is Elongation factor Ts from Kocuria rhizophila (strain ATCC 9341 / DSM 348 / NBRC 103217 / DC2201).